Reading from the N-terminus, the 122-residue chain is Large ribosomal subunit protein uL14 (122 aa).

It belongs to the universal ribosomal protein uL14 family. As to quaternary structure, part of the 50S ribosomal subunit. Forms a cluster with proteins L3 and L19. In the 70S ribosome, L14 and L19 interact and together make contacts with the 16S rRNA in bridges B5 and B8.

Functionally, binds to 23S rRNA. Forms part of two intersubunit bridges in the 70S ribosome. The chain is Large ribosomal subunit protein uL14 from Geobacillus kaustophilus (strain HTA426).